Here is a 241-residue protein sequence, read N- to C-terminus: Probable FKBP-type peptidyl-prolyl cis-trans isomerase (241 aa).

The 92-residue stretch at 150–241 folds into the PPIase FKBP-type domain; the sequence is TDTVKVHYTG…VLDVNPKSEK (92 aa).

It belongs to the FKBP-type PPIase family.

It catalyses the reaction [protein]-peptidylproline (omega=180) = [protein]-peptidylproline (omega=0). Its function is as follows. PPIases accelerate the folding of proteins. It catalyzes the cis-trans isomerization of proline imidic peptide bonds in oligopeptides. This Haemophilus influenzae (strain ATCC 51907 / DSM 11121 / KW20 / Rd) protein is Probable FKBP-type peptidyl-prolyl cis-trans isomerase.